A 481-amino-acid polypeptide reads, in one-letter code: UDP-N-acetylmuramoylalanine--D-glutamate ligase (481 aa).

108 to 114 (GTNGKTS) is a binding site for ATP.

This sequence belongs to the MurCDEF family.

It localises to the cytoplasm. It carries out the reaction UDP-N-acetyl-alpha-D-muramoyl-L-alanine + D-glutamate + ATP = UDP-N-acetyl-alpha-D-muramoyl-L-alanyl-D-glutamate + ADP + phosphate + H(+). It functions in the pathway cell wall biogenesis; peptidoglycan biosynthesis. In terms of biological role, cell wall formation. Catalyzes the addition of glutamate to the nucleotide precursor UDP-N-acetylmuramoyl-L-alanine (UMA). This is UDP-N-acetylmuramoylalanine--D-glutamate ligase from Bifidobacterium longum (strain DJO10A).